Consider the following 285-residue polypeptide: CCR4-NOT transcription complex subunit 7 (285 aa).

Residues aspartate 40, glutamate 42, aspartate 161, aspartate 230, and glutamate 278 each contribute to the a divalent metal cation site.

This sequence belongs to the CAF1 family. Component of the CCR4-NOT complex. Mn(2+) serves as cofactor. The cofactor is Mg(2+). It depends on Co(2+) as a cofactor.

The protein localises to the nucleus. It is found in the cytoplasm. The catalysed reaction is Exonucleolytic cleavage of poly(A) to 5'-AMP.. Its function is as follows. Has 3'-5' poly(A) exoribonuclease activity for synthetic poly(A) RNA substrate. Catalytic component of the CCR4-NOT complex which is one of the major cellular mRNA deadenylases and is linked to various cellular processes including bulk mRNA degradation, miRNA-mediated repression, translational repression during translational initiation and general transcription regulation. During miRNA-mediated repression the complex also seems to act as translational repressor during translational initiation. Additional complex functions may be a consequence of its influence on mRNA expression. This Gallus gallus (Chicken) protein is CCR4-NOT transcription complex subunit 7 (CNOT7).